The chain runs to 175 residues: ATP synthase subunit b, chloroplastic (175 aa).

The helical transmembrane segment at 22–42 threads the bilayer; that stretch reads VFETNIINLAAVVGIVVSFVG.

Belongs to the ATPase B chain family. In terms of assembly, F-type ATPases have 2 components, F(1) - the catalytic core - and F(0) - the membrane proton channel. F(1) has five subunits: alpha(3), beta(3), gamma(1), delta(1), epsilon(1). F(0) has four main subunits: a(1), b(1), b'(1) and c(10-14). The alpha and beta chains form an alternating ring which encloses part of the gamma chain. F(1) is attached to F(0) by a central stalk formed by the gamma and epsilon chains, while a peripheral stalk is formed by the delta, b and b' chains.

It is found in the plastid. It localises to the chloroplast thylakoid membrane. Functionally, f(1)F(0) ATP synthase produces ATP from ADP in the presence of a proton or sodium gradient. F-type ATPases consist of two structural domains, F(1) containing the extramembraneous catalytic core and F(0) containing the membrane proton channel, linked together by a central stalk and a peripheral stalk. During catalysis, ATP synthesis in the catalytic domain of F(1) is coupled via a rotary mechanism of the central stalk subunits to proton translocation. In terms of biological role, component of the F(0) channel, it forms part of the peripheral stalk, linking F(1) to F(0). This Chlamydomonas reinhardtii (Chlamydomonas smithii) protein is ATP synthase subunit b, chloroplastic.